The primary structure comprises 206 residues: LexA repressor (206 aa).

A DNA-binding region (H-T-H motif) is located at residues 28–48 (VREICAAVGLSSTSTVHGHLT). Catalysis depends on for autocatalytic cleavage activity residues serine 127 and lysine 165.

The protein belongs to the peptidase S24 family. As to quaternary structure, homodimer.

The enzyme catalyses Hydrolysis of Ala-|-Gly bond in repressor LexA.. Represses a number of genes involved in the response to DNA damage (SOS response), including recA and lexA. In the presence of single-stranded DNA, RecA interacts with LexA causing an autocatalytic cleavage which disrupts the DNA-binding part of LexA, leading to derepression of the SOS regulon and eventually DNA repair. This is LexA repressor from Lactobacillus delbrueckii subsp. bulgaricus (strain ATCC 11842 / DSM 20081 / BCRC 10696 / JCM 1002 / NBRC 13953 / NCIMB 11778 / NCTC 12712 / WDCM 00102 / Lb 14).